The primary structure comprises 180 residues: Ribulose bisphosphate carboxylase small subunit, chloroplastic 4 (180 aa).

The N-terminal 56 residues, 1–56 (MASSIVSSAAVATRGNGAQASMVAPFTGLKSTASFPVSRKQNLDITSIASNGGRVS), are a transit peptide targeting the chloroplast.

This sequence belongs to the RuBisCO small chain family. As to quaternary structure, heterohexadecamer of 8 large and 8 small subunits. (Microbial infection) Binds to tobamovirus movement protein; this interaction seems required for viral systemic movement.

Its subcellular location is the plastid. The protein localises to the chloroplast. It localises to the cell junction. It is found in the plasmodesma. RuBisCO catalyzes two reactions: the carboxylation of D-ribulose 1,5-bisphosphate, the primary event in carbon dioxide fixation, as well as the oxidative fragmentation of the pentose substrate. Both reactions occur simultaneously and in competition at the same active site. Although the small subunit is not catalytic it is essential for maximal activity. Involved in antiviral defenses. The protein is Ribulose bisphosphate carboxylase small subunit, chloroplastic 4 of Solanum lycopersicum (Tomato).